Reading from the N-terminus, the 318-residue chain is Pantothenate synthetase (318 aa).

An ATP-binding site is contributed by 44 to 51 (MGALHQGH). His51 serves as the catalytic Proton donor. Position 75 (Gln75) interacts with (R)-pantoate. Gln75 lines the beta-alanine pocket. 161–164 (GEKD) is a binding site for ATP. Gln167 is a binding site for (R)-pantoate. ATP is bound by residues Val190 and 198–201 (LSSR). The interval 295–318 (DGHPNLDSQPEPAGTDPALLPPAR) is disordered.

Belongs to the pantothenate synthetase family. As to quaternary structure, homodimer.

Its subcellular location is the cytoplasm. It carries out the reaction (R)-pantoate + beta-alanine + ATP = (R)-pantothenate + AMP + diphosphate + H(+). It functions in the pathway cofactor biosynthesis; (R)-pantothenate biosynthesis; (R)-pantothenate from (R)-pantoate and beta-alanine: step 1/1. In terms of biological role, catalyzes the condensation of pantoate with beta-alanine in an ATP-dependent reaction via a pantoyl-adenylate intermediate. This is Pantothenate synthetase from Nocardia farcinica (strain IFM 10152).